A 314-amino-acid chain; its full sequence is Ribosomal RNA small subunit methyltransferase H (314 aa).

Residues 34-36 (GGH), aspartate 53, phenylalanine 82, aspartate 103, and glutamine 110 each bind S-adenosyl-L-methionine.

Belongs to the methyltransferase superfamily. RsmH family.

The protein resides in the cytoplasm. The enzyme catalyses cytidine(1402) in 16S rRNA + S-adenosyl-L-methionine = N(4)-methylcytidine(1402) in 16S rRNA + S-adenosyl-L-homocysteine + H(+). Specifically methylates the N4 position of cytidine in position 1402 (C1402) of 16S rRNA. In Levilactobacillus brevis (strain ATCC 367 / BCRC 12310 / CIP 105137 / JCM 1170 / LMG 11437 / NCIMB 947 / NCTC 947) (Lactobacillus brevis), this protein is Ribosomal RNA small subunit methyltransferase H.